The following is a 266-amino-acid chain: Zinc transporter ZupT (266 aa).

8 helical membrane-spanning segments follow: residues 8 to 28 (LLLTLLAGLSTGIGSAMALVV), 35 to 55 (FLTLALGFSAGVMLYVSFVEL), 70 to 90 (QAAAWVATLAFFGGIFFIWAI), 123 to 143 (GLFTAAAIAIHNFPEGMAVFF), 152 to 172 (GIVIATTIALHNIPEGMAIAV), 185 to 205 (FTYSFLSGLAEPLGAIVGFAI), 209 to 229 (WLSPPVFGSVLAAVAGIMVYI), and 246 to 266 (LAISGLIAGMAVMALSLLLLA). Fe(2+) contacts are provided by asparagine 134 and glutamate 137. Zn(2+) contacts are provided by glutamate 137 and histidine 162. The Fe(2+) site is built by asparagine 163, glutamate 166, and glutamate 195. Residue glutamate 166 participates in Zn(2+) binding.

Belongs to the ZIP transporter (TC 2.A.5) family. ZupT subfamily.

It is found in the cell membrane. It carries out the reaction Zn(2+)(in) = Zn(2+)(out). Mediates zinc uptake. May also transport other divalent cations. The protein is Zinc transporter ZupT of Chlorobium phaeovibrioides (strain DSM 265 / 1930) (Prosthecochloris vibrioformis (strain DSM 265)).